A 470-amino-acid polypeptide reads, in one-letter code: FAD-dependent monooxygenase dpchE (470 aa).

A signal peptide spans 1-24; the sequence is MSEPHFKVIIVGGSITGLTLAHSL. FAD is bound by residues Glu-35, Gly-49, and Arg-108. N-linked (GlcNAc...) asparagine glycosylation occurs at Asn-128. Arg-193 is a catalytic residue. FAD contacts are provided by Asp-312 and Ala-325. Residues 447–463 form a helical membrane-spanning segment; the sequence is WAVVSRSVLLLVGLAIL.

Belongs to the paxM FAD-dependent monooxygenase family. The cofactor is FAD.

The protein localises to the membrane. The protein operates within secondary metabolite biosynthesis; terpenoid biosynthesis. Its function is as follows. FAD-dependent monooxygenase; part of the gene cluster that mediates the biosynthesis of the diterpenoid pyrones higginsianins A and B. The first step of the pathway is the synthesis of the alpha-pyrone moiety by the polyketide synthase dpchA via condensation of one acetyl-CoA starter unit with 3 malonyl-CoA units and 2 methylations. The alpha-pyrone is then combined with geranylgeranyl pyrophosphate (GGPP) formed by the GGPP synthase dpchD through the action of the prenyltransferase dpchC to yield a linear alpha-pyrone diterpenoid. Subsequent steps in the diterpenoid pyrone biosynthetic pathway involve the decalin core formation, which is initiated by the epoxidation of the C10-C11 olefin by the FAD-dependent oxidoreductase dpchE, and is followed by a cyclization cascade catalyzed by the terpene cyclase dpchB. The short chain dehydrogenase/reductase dpchG then oxidizes the 8S hydroxy group to a ketone and the short chain dehydrogenase/reductase dpchH reduces the ketone to the 8R hydroxy group to yield higginsianin B. Finally, the FAD-dependent oxidoreductase dpchF converts higginsianin B into higginsianin A. This chain is FAD-dependent monooxygenase dpchE, found in Colletotrichum higginsianum (strain IMI 349063) (Crucifer anthracnose fungus).